The chain runs to 340 residues: PI-PLC X domain-containing protein 2 (340 aa).

The 174-residue stretch at 42–215 (HLHNVPLSNL…KYQVLIFYHC (174 aa)) folds into the PI-PLC X-box domain. Active-site residues include H57 and H132.

As to expression, expressed at highest levels in brain, followed by stomach and small intestine. Detected at low levels in kidney, ey, thymus and slkeletal muscle.

The protein resides in the nucleus. The catalysed reaction is a 1,2-diacyl-sn-glycero-3-phospho-(1D-myo-inositol) + H2O = 1D-myo-inositol 1-phosphate + a 1,2-diacyl-sn-glycerol + H(+). Its function is as follows. Catalyzes the hydrolysis of inositol from phosphatidylinositol (1,2-diacyl-sn-glycero-3-phospho-(1D-myo-inositol), PI). Could also hydrolyze various multi-phosphorylated derivatives of PI, such as phosphatidylinositol-4,5 bisphosphate (PIP2), releasing inositol-1,4,5-trisphosphate (IP3) and the protein kinase C activator diacylglycerol (DAG), therefore mediating cell signaling. In Mus musculus (Mouse), this protein is PI-PLC X domain-containing protein 2 (Plcxd2).